Reading from the N-terminus, the 338-residue chain is MAAPGRPSPLAERLRGAWQHRGALALALWPLSLLYGVLTALRRALYRTGLLRSERLPVPVIVVGNVIAGGAGKTPVTLAVVRHLQARGWRPGVISRGYGRATADCREVLPASSAAEVGDEPLLIARASGAPVFVARRRAQAGRALLAAHPATNILVCDDGLQHLALARDLEVCVFNDEGAGNGWLLPAGPLREPWPRAVDLVLHAGSPPGGGAPQFALSRELAAHAVNASGQHLPLEQLQGEPLHALAAIARPHDFFAMLHARGLQPESEEALPDHYDFSSWKRPPDKRLRLICTEKDAVKLWPAHPDALAVPLALRIPPAFFDTLDARLASLSSSGH.

67 to 74 (IAGGAGKT) provides a ligand contact to ATP.

It belongs to the LpxK family.

It catalyses the reaction a lipid A disaccharide + ATP = a lipid IVA + ADP + H(+). It functions in the pathway glycolipid biosynthesis; lipid IV(A) biosynthesis; lipid IV(A) from (3R)-3-hydroxytetradecanoyl-[acyl-carrier-protein] and UDP-N-acetyl-alpha-D-glucosamine: step 6/6. Functionally, transfers the gamma-phosphate of ATP to the 4'-position of a tetraacyldisaccharide 1-phosphate intermediate (termed DS-1-P) to form tetraacyldisaccharide 1,4'-bis-phosphate (lipid IVA). The protein is Tetraacyldisaccharide 4'-kinase of Acidovorax sp. (strain JS42).